The following is a 189-amino-acid chain: dCTP deaminase, dUMP-forming (189 aa).

DCTP is bound by residues 101–106 (KSSLGR), Asp119, 127–129 (TLE), Gln148, Tyr162, and Gln174. The Proton donor/acceptor role is filled by Glu129.

This sequence belongs to the dCTP deaminase family. As to quaternary structure, homotrimer.

It catalyses the reaction dCTP + 2 H2O = dUMP + NH4(+) + diphosphate. It functions in the pathway pyrimidine metabolism; dUMP biosynthesis; dUMP from dCTP: step 1/1. Bifunctional enzyme that catalyzes both the deamination of dCTP to dUTP and the hydrolysis of dUTP to dUMP without releasing the toxic dUTP intermediate. This is dCTP deaminase, dUMP-forming from Rhodococcus opacus (strain B4).